The chain runs to 543 residues: Phosphoribosylaminoimidazole carboxylase (543 aa).

The region spanning 110–297 is the ATP-grasp domain; the sequence is KEHLIKNGIA…QFEAHVRAIT (188 aa). 137–192 is a binding site for ATP; that stretch reads GAKYGFPYMLKSRTMAYDGRGNFVVKDKSYIPEALKVLDDRPLYAEKWAPFSKELA.

It in the C-terminal section; belongs to the AIR carboxylase family. Class I subfamily.

It catalyses the reaction 5-amino-1-(5-phospho-D-ribosyl)imidazole-4-carboxylate + H(+) = 5-amino-1-(5-phospho-beta-D-ribosyl)imidazole + CO2. It functions in the pathway purine metabolism; IMP biosynthesis via de novo pathway; 5-amino-1-(5-phospho-D-ribosyl)imidazole-4-carboxylate from 5-amino-1-(5-phospho-D-ribosyl)imidazole (carboxylase route): step 1/1. The sequence is that of Phosphoribosylaminoimidazole carboxylase (ADE1) from Ogataea methanolica (Yeast).